Consider the following 488-residue polypeptide: Beta-amylase (488 aa).

Residues Asp51, His91, and Asp99 each coordinate substrate. Glu184 serves as the catalytic Proton donor. Positions 293, 298, and 340 each coordinate substrate. Glu378 serves as the catalytic Proton acceptor. Substrate-binding positions include 379-380 and Arg418; that span reads NA.

This sequence belongs to the glycosyl hydrolase 14 family.

It catalyses the reaction Hydrolysis of (1-&gt;4)-alpha-D-glucosidic linkages in polysaccharides so as to remove successive maltose units from the non-reducing ends of the chains.. The chain is Beta-amylase (BMY1) from Zea mays (Maize).